Reading from the N-terminus, the 229-residue chain is Putative N-acetylmannosamine-6-phosphate 2-epimerase (229 aa).

This sequence belongs to the NanE family.

It carries out the reaction an N-acyl-D-glucosamine 6-phosphate = an N-acyl-D-mannosamine 6-phosphate. It participates in amino-sugar metabolism; N-acetylneuraminate degradation; D-fructose 6-phosphate from N-acetylneuraminate: step 3/5. Its function is as follows. Converts N-acetylmannosamine-6-phosphate (ManNAc-6-P) to N-acetylglucosamine-6-phosphate (GlcNAc-6-P). The chain is Putative N-acetylmannosamine-6-phosphate 2-epimerase from Shigella sonnei (strain Ss046).